A 738-amino-acid chain; its full sequence is Ent-kaurene synthase-like 1 (738 aa).

Positions 487, 491, 631, 632, and 639 each coordinate Mg(2+). The DDXXD motif motif lies at 487–491 (DDFFD).

Belongs to the terpene synthase family. It depends on Mg(2+) as a cofactor.

It carries out the reaction ent-copalyl diphosphate = ent-kaur-16-ene + diphosphate. It participates in secondary metabolite biosynthesis; terpenoid biosynthesis. Functionally, diterpene cyclase involved in the biosynthesis of labdane-related diterpenoids (LRDs) natural products. Catalyzes the cyclization of ent-CDP into ent-kaurene. The sequence is that of Ent-kaurene synthase-like 1 from Ricinus communis (Castor bean).